Reading from the N-terminus, the 462-residue chain is Nuclear distribution protein PAC1 (462 aa).

A LisH domain is found at 9 to 41 (QAEELHKAIIAYLGVINAPKTAAAFREEVNFSA). A coiled-coil region spans residues 60-87 (TSVVRLQKKVLELEQRNQSLQSELDSTT). Positions 78–99 (SLQSELDSTTPTSLLRRNQDPS) are enriched in polar residues. Residues 78 to 103 (SLQSELDSTTPTSLLRRNQDPSSWLP) are disordered. WD repeat units follow at residues 113-154 (SHRS…RTVK), 156-196 (HTKG…KNIR), 200-247 (GHDH…CVKT), 250-289 (GHADWVRDVSPSFDGRWLLSAGNDQTARLWDASSGEAKCT), 292-352 (GHEH…IKTL), 354-393 (GHDNWVRALIFHPGGKYLLSASDDKTIRCWDLTQEGRCVK), 398-445 (AHSH…AGIR), and 447-462 (VIATGCVDLNVRIFAS). Residues 414–434 (KDAPTNGDAPNGTTANGASKK) are disordered.

The protein belongs to the WD repeat LIS1/nudF family. Self-associates. Interacts with NDL1 and dynein.

It is found in the cytoplasm. Its subcellular location is the cytoskeleton. The protein resides in the spindle pole. Functionally, positively regulates the activity of the minus-end directed microtubule motor protein dynein. May enhance dynein-mediated microtubule sliding by targeting dynein to the microtubule plus end. Required for nuclear migration during vegetative growth as well as development. Required for retrograde early endosome (EE) transport from the hyphal tip. Required for localization of dynein to the mitotic spindle poles. Recruits additional proteins to the dynein complex at SPBs. This is Nuclear distribution protein PAC1 from Phaeosphaeria nodorum (strain SN15 / ATCC MYA-4574 / FGSC 10173) (Glume blotch fungus).